Consider the following 627-residue polypeptide: Altered inheritance of mitochondria protein 9, mitochondrial (627 aa).

Residues 1–43 constitute a mitochondrion transit peptide; that stretch reads MIRYTVAGHSRRCVVGASKRVGAIKCITVAATKRFISNKPNEV.

It belongs to the AIM9 family.

It is found in the mitochondrion. In Saccharomyces cerevisiae (strain RM11-1a) (Baker's yeast), this protein is Altered inheritance of mitochondria protein 9, mitochondrial (AIM9).